A 259-amino-acid polypeptide reads, in one-letter code: Phosphatidylglycerol--prolipoprotein diacylglyceryl transferase (259 aa).

The next 4 membrane-spanning stretches (helical) occupy residues 10-30, 50-70, 86-106, and 112-132; these read IGLL…LFAY, IISW…ILFY, WKGG…MYIF, and IKFL…IFLG. Arginine 133 is an a 1,2-diacyl-sn-glycero-3-phospho-(1'-sn-glycerol) binding site. 3 helical membrane-spanning segments follow: residues 169–189, 197–217, and 227–247; these read LYEA…LFFF, GMLF…IEFV, and ILFN…ILGI.

It belongs to the Lgt family.

The protein localises to the cell inner membrane. The catalysed reaction is L-cysteinyl-[prolipoprotein] + a 1,2-diacyl-sn-glycero-3-phospho-(1'-sn-glycerol) = an S-1,2-diacyl-sn-glyceryl-L-cysteinyl-[prolipoprotein] + sn-glycerol 1-phosphate + H(+). It participates in protein modification; lipoprotein biosynthesis (diacylglyceryl transfer). Its function is as follows. Catalyzes the transfer of the diacylglyceryl group from phosphatidylglycerol to the sulfhydryl group of the N-terminal cysteine of a prolipoprotein, the first step in the formation of mature lipoproteins. This is Phosphatidylglycerol--prolipoprotein diacylglyceryl transferase from Ehrlichia ruminantium (strain Gardel).